We begin with the raw amino-acid sequence, 550 residues long: Chaperonin GroEL 1 (550 aa).

ATP is bound by residues 30 to 33 (TLGP), Lys-51, 87 to 91 (DGTTT), Gly-415, and Asp-496.

It belongs to the chaperonin (HSP60) family. Forms a cylinder of 14 subunits composed of two heptameric rings stacked back-to-back. Interacts with the co-chaperonin GroES.

The protein resides in the cytoplasm. The catalysed reaction is ATP + H2O + a folded polypeptide = ADP + phosphate + an unfolded polypeptide.. In terms of biological role, together with its co-chaperonin GroES, plays an essential role in assisting protein folding. The GroEL-GroES system forms a nano-cage that allows encapsulation of the non-native substrate proteins and provides a physical environment optimized to promote and accelerate protein folding. The protein is Chaperonin GroEL 1 of Rhodopseudomonas palustris (strain HaA2).